The chain runs to 542 residues: Protein MGF 505-11L (542 aa).

This sequence belongs to the asfivirus MGF 505 family.

Plays a role in virus cell tropism, and may be required for efficient virus replication in macrophages. This chain is Protein MGF 505-11L, found in African swine fever virus (isolate Warthog/Namibia/Wart80/1980) (ASFV).